The sequence spans 509 residues: UDP-N-acetylmuramoylalanine--D-glutamate ligase (509 aa).

116–122 (GTNGKST) provides a ligand contact to ATP.

Belongs to the MurCDEF family.

Its subcellular location is the cytoplasm. The catalysed reaction is UDP-N-acetyl-alpha-D-muramoyl-L-alanine + D-glutamate + ATP = UDP-N-acetyl-alpha-D-muramoyl-L-alanyl-D-glutamate + ADP + phosphate + H(+). Its pathway is cell wall biogenesis; peptidoglycan biosynthesis. In terms of biological role, cell wall formation. Catalyzes the addition of glutamate to the nucleotide precursor UDP-N-acetylmuramoyl-L-alanine (UMA). This Wolbachia pipientis wMel protein is UDP-N-acetylmuramoylalanine--D-glutamate ligase.